Reading from the N-terminus, the 146-residue chain is Leghemoglobin alpha (146 aa).

The region spanning 3–146 (AFTEKQEALV…LAAAIKKAYA (144 aa)) is the Globin domain. Nitrated tyrosine is present on residues tyrosine 26 and tyrosine 31. Serine 46 serves as a coordination point for heme b. A Phosphoserine modification is found at serine 46. Histidine 62 contacts O2. Heme b-binding residues include histidine 93 and lysine 96. Position 134 is a nitrated tyrosine (tyrosine 134).

This sequence belongs to the plant globin family. In terms of assembly, monomer. Post-translationally, nitrated mainly at Tyr-31 and, to a lower extent, at Tyr-26 and Tyr-134, in effective nodules and particularly in hypoxic conditions; this mechanism may play a protective role in the symbiosis by buffering toxic peroxynitrite NO(2)(-). Nitration level decrease during nodule senescence. In terms of processing, phosphorylation at Ser-46 disrupts the molecular environment of its porphyrin ring oxygen binding pocket, thus leading to a reduced oxygen consumption and to the delivery of oxygen O(2) to symbiosomes. As to expression, root nodules.

The protein resides in the cytoplasm. The protein localises to the cytosol. Its subcellular location is the nucleus. In terms of biological role, leghemoglobin that reversibly binds oxygen O(2) through a pentacoordinated heme iron. In root nodules, facilitates the diffusion of oxygen to the bacteroids while preventing the bacterial nitrogenase from being inactivated by buffering dioxygen, nitric oxide and carbon monoxide, and promoting the formation of reactive oxygen species (ROS, e.g. H(2)O(2)). This role is essential for symbiotic nitrogen fixation (SNF). The protein is Leghemoglobin alpha of Phaseolus vulgaris (Kidney bean).